We begin with the raw amino-acid sequence, 314 residues long: uncharacterized protein (314 aa).

Residues 1–70 (MAGNSQRRGA…QGRHKKTDDT (70 aa)) form a disordered region. Residues 44-65 (RPHHPAGKRAAKAARQAQGRHK) are compositionally biased toward basic residues. Residues glycine 265, isoleucine 285, and leucine 294 each coordinate S-adenosyl-L-methionine.

Belongs to the class IV-like SAM-binding methyltransferase superfamily. RNA methyltransferase TrmH family.

This is an uncharacterized protein from Mycolicibacterium gilvum (strain PYR-GCK) (Mycobacterium gilvum (strain PYR-GCK)).